The sequence spans 195 residues: Phenoloxidase subunit 1 (195 aa).

His10 serves as a coordination point for Cu cation. Asn77, Asn97, and Asn98 each carry an N-linked (GlcNAc...) asparagine glycan.

It belongs to the tyrosinase family. In terms of assembly, heterodimer. The cofactor is Cu(2+).

It localises to the secreted. It catalyses the reaction 2 L-dopa + O2 = 2 L-dopaquinone + 2 H2O. The enzyme catalyses L-tyrosine + O2 = L-dopaquinone + H2O. Its function is as follows. This is a copper-containing oxidase that functions in the formation of pigments such as melanins and other polyphenolic compounds. Catalyzes the rate-limiting conversions of tyrosine to DOPA, DOPA to DOPA-quinone and possibly 5,6 dihydroxyindole to indole-5'6 quinone. The chain is Phenoloxidase subunit 1 from Simulium damnosum (Black fly).